The sequence spans 88 residues: DNA-directed RNA polymerase subunit omega (88 aa).

This sequence belongs to the RNA polymerase subunit omega family. In terms of assembly, the RNAP catalytic core consists of 2 alpha, 1 beta, 1 beta' and 1 omega subunit. When a sigma factor is associated with the core the holoenzyme is formed, which can initiate transcription.

It carries out the reaction RNA(n) + a ribonucleoside 5'-triphosphate = RNA(n+1) + diphosphate. In terms of biological role, promotes RNA polymerase assembly. Latches the N- and C-terminal regions of the beta' subunit thereby facilitating its interaction with the beta and alpha subunits. The polypeptide is DNA-directed RNA polymerase subunit omega (Anaeromyxobacter dehalogenans (strain 2CP-1 / ATCC BAA-258)).